A 337-amino-acid polypeptide reads, in one-letter code: Anthranilate phosphoribosyltransferase (337 aa).

Residues Gly-81, 84–85, Ser-89, 91–94, 109–117, and Ala-121 each bind 5-phospho-alpha-D-ribose 1-diphosphate; these read GD, NVST, and KHGNRALSS. Gly-81 provides a ligand contact to anthranilate. Residue Ser-93 coordinates Mg(2+). Asn-112 is a binding site for anthranilate. Arg-167 provides a ligand contact to anthranilate. Asp-226 and Glu-227 together coordinate Mg(2+).

The protein belongs to the anthranilate phosphoribosyltransferase family. Homodimer. The cofactor is Mg(2+).

It carries out the reaction N-(5-phospho-beta-D-ribosyl)anthranilate + diphosphate = 5-phospho-alpha-D-ribose 1-diphosphate + anthranilate. The protein operates within amino-acid biosynthesis; L-tryptophan biosynthesis; L-tryptophan from chorismate: step 2/5. Its function is as follows. Catalyzes the transfer of the phosphoribosyl group of 5-phosphorylribose-1-pyrophosphate (PRPP) to anthranilate to yield N-(5'-phosphoribosyl)-anthranilate (PRA). The chain is Anthranilate phosphoribosyltransferase from Bradyrhizobium diazoefficiens (strain JCM 10833 / BCRC 13528 / IAM 13628 / NBRC 14792 / USDA 110).